A 345-amino-acid chain; its full sequence is Glycerol-3-phosphate dehydrogenase [NAD(P)+] (345 aa).

Residues Ser23, Tyr24, His44, and Lys118 each contribute to the NADPH site. Sn-glycerol 3-phosphate is bound by residues Lys118, Gly147, and Thr149. Position 151 (Ala151) interacts with NADPH. Sn-glycerol 3-phosphate is bound by residues Lys203, Asp256, Ser266, Arg267, and Asn268. The active-site Proton acceptor is the Lys203. Arg267 is a binding site for NADPH. Positions 291 and 293 each coordinate NADPH.

Belongs to the NAD-dependent glycerol-3-phosphate dehydrogenase family.

It localises to the cytoplasm. The catalysed reaction is sn-glycerol 3-phosphate + NAD(+) = dihydroxyacetone phosphate + NADH + H(+). The enzyme catalyses sn-glycerol 3-phosphate + NADP(+) = dihydroxyacetone phosphate + NADPH + H(+). Its pathway is membrane lipid metabolism; glycerophospholipid metabolism. Functionally, catalyzes the reduction of the glycolytic intermediate dihydroxyacetone phosphate (DHAP) to sn-glycerol 3-phosphate (G3P), the key precursor for phospholipid synthesis. This chain is Glycerol-3-phosphate dehydrogenase [NAD(P)+], found in Vibrio vulnificus (strain CMCP6).